Consider the following 277-residue polypeptide: Uridine phosphorylase (277 aa).

It belongs to the PNP/UDP phosphorylase family.

It localises to the cytoplasm. It carries out the reaction uridine + phosphate = alpha-D-ribose 1-phosphate + uracil. Its pathway is pyrimidine metabolism; UMP biosynthesis via salvage pathway; uracil from uridine (phosphorylase route): step 1/1. Its function is as follows. Catalyzes the reversible phosphorylytic cleavage of uridine to uracil and ribose-1-phosphate. The chain is Uridine phosphorylase from Thermococcus kodakarensis (strain ATCC BAA-918 / JCM 12380 / KOD1) (Pyrococcus kodakaraensis (strain KOD1)).